The sequence spans 510 residues: Glycerol kinase (510 aa).

Residue threonine 13 coordinates ADP. 2 residues coordinate ATP: threonine 13 and threonine 14. Threonine 13 contributes to the sn-glycerol 3-phosphate binding site. Arginine 17 is an ADP binding site. The sn-glycerol 3-phosphate site is built by arginine 83, glutamate 84, tyrosine 135, and aspartate 255. Glycerol contacts are provided by arginine 83, glutamate 84, tyrosine 135, aspartate 255, and glutamine 256. ADP-binding residues include threonine 277, glycine 321, glycine 421, and asparagine 425. ATP is bound by residues threonine 277, glycine 321, and glycine 421.

Belongs to the FGGY kinase family.

It catalyses the reaction glycerol + ATP = sn-glycerol 3-phosphate + ADP + H(+). It participates in polyol metabolism; glycerol degradation via glycerol kinase pathway; sn-glycerol 3-phosphate from glycerol: step 1/1. Its function is as follows. Key enzyme in the regulation of glycerol uptake and metabolism. Catalyzes the phosphorylation of glycerol to yield sn-glycerol 3-phosphate. In Haloquadratum walsbyi (strain DSM 16790 / HBSQ001), this protein is Glycerol kinase.